Consider the following 887-residue polypeptide: Autotaxin (887 aa).

Positions 1–27 (MARQGCLGSFQVISLFTFAISVNICLG) are cleaved as a signal peptide. Positions 28-35 (FTASRIKR) are cleaved as a propeptide — removed by furin. A glycan (N-linked (GlcNAc...) asparagine) is linked at Asn53. 2 consecutive SMB domains span residues 54 to 97 (TSGS…LKTA) and 98 to 142 (RGWE…GESH). 10 cysteine pairs are disulfide-bonded: Cys58–Cys75, Cys62–Cys93, Cys73–Cys86, Cys79–Cys85, Cys102–Cys119, Cys107–Cys137, Cys117–Cys130, Cys123–Cys129, Cys148–Cys194, and Cys156–Cys350. Residues 126–128 (RGD) carry the Cell attachment site motif. Residues 144–501 (VDDDCEEIKV…PTFKYRTKVP (358 aa)) are phosphodiesterase. Residues Asp171 and Thr209 each contribute to the Zn(2+) site. Residue Thr209 is the Nucleophile of the active site. 1-(9Z-octadecenoyl)-sn-glycero-3-phosphate contacts are provided by Thr209, Asn230, and Asp311. 1-hexadecanoyl-sn-glycero-3-phosphate is bound by residues Thr209, Asn230, and Asp311. 1-tetradecanoyl-sn-glycerol 3-phosphate-binding residues include Thr209, Asn230, and Asp311. 4 residues coordinate Zn(2+): Asp311, His315, Asp358, and His359. Disulfide bonds link Cys366-Cys468, Cys413-Cys830, Cys566-Cys691, Cys568-Cys676, and Cys799-Cys809. 2 N-linked (GlcNAc...) asparagine glycosylation sites follow: Asn398 and Asn410. His474 is a binding site for Zn(2+). His474 lines the 1-(9Z-octadecenoyl)-sn-glycero-3-phosphate pocket. 1-hexadecanoyl-sn-glycero-3-phosphate is bound at residue His474. Residue His474 coordinates 1-tetradecanoyl-sn-glycerol 3-phosphate. Residue Asn524 is glycosylated (N-linked (GlcNAc...) asparagine). Basic and acidic residues predominate over residues 586–607 (HTKGSTEAETGKFRGSKHENKK). The interval 586–615 (HTKGSTEAETGKFRGSKHENKKNLNGSVEP) is disordered. Asn610 carries an N-linked (GlcNAc...) asparagine glycan. Residues 622 to 887 (LYGRPAVLYR…TYLHTYESEI (266 aa)) are nuclease-like domain. Ca(2+)-binding residues include Asp764, Asn766, Asp768, Leu770, and Asp772. Residue Asn831 is glycosylated (N-linked (GlcNAc...) asparagine). A required for secretion region spans residues 854 to 875 (IEHLTGLDFYRKTSRSYSEILT).

The protein belongs to the nucleotide pyrophosphatase/phosphodiesterase family. The cofactor is Zn(2+). Requires Ca(2+) as cofactor. N-glycosylation, but not furin-cleavage, plays a critical role on secretion and on lysoPLD activity. Post-translationally, the interdomain disulfide bond between Cys-413 and Cys-830 is essential for catalytic activity. As to expression, abundantly expressed in cerebrum and cerebellum. Localized in secretory epithelial cells in the brain and the eye including choroid plexus epithelial cells, ciliary epithelial cells, iris pigment epithelial cells, and retinal pigment cells.

It localises to the secreted. It catalyses the reaction a 1-O-alkyl-sn-glycero-3-phosphoethanolamine + H2O = a 1-O-alkyl-sn-glycero-3-phosphate + ethanolamine + H(+). The enzyme catalyses a 1-acyl-sn-glycero-3-phosphoethanolamine + H2O = a 1-acyl-sn-glycero-3-phosphate + ethanolamine + H(+). It carries out the reaction 1-(9Z-octadecenoyl)-sn-glycero-3-phosphoethanolamine + H2O = 1-(9Z-octadecenoyl)-sn-glycero-3-phosphate + ethanolamine + H(+). The catalysed reaction is a 1-O-alkyl-sn-glycero-3-phosphocholine + H2O = a 1-O-alkyl-sn-glycero-3-phosphate + choline + H(+). It catalyses the reaction 1-O-(9Z-octadecenyl)-sn-glycero-3-phosphocholine + H2O = 1-O-(9Z-octadecenyl)-sn-glycero-3-phosphate + choline + H(+). The enzyme catalyses 1-O-hexadecyl-sn-glycero-3-phosphocholine + H2O = 1-O-hexadecyl-sn-glycero-3-phosphate + choline + H(+). It carries out the reaction a 1-O-(1Z-alkenyl)-sn-glycero-3-phosphocholine + H2O = a 1-O-(1Z-alkenyl)-sn-glycero-3-phosphate + choline + H(+). The catalysed reaction is a 1-acyl-sn-glycero-3-phosphocholine + H2O = a 1-acyl-sn-glycero-3-phosphate + choline + H(+). It catalyses the reaction 1-dodecanoyl-sn-glycero-3-phosphocholine + H2O = 1-dodecanoyl-sn-glycerol 3-phosphate + choline + H(+). The enzyme catalyses 1-(9Z-octadecenoyl)-sn-glycero-3-phosphocholine + H2O = 1-(9Z-octadecenoyl)-sn-glycero-3-phosphate + choline + H(+). It carries out the reaction 1-tetradecanoyl-sn-glycero-3-phosphocholine + H2O = 1-tetradecanoyl-sn-glycerol 3-phosphate + choline + H(+). The catalysed reaction is 1-decanoyl-sn-glycero-3-phosphocholine + H2O = 1-decanoyl-sn-glycero-3-phosphate + choline + H(+). It catalyses the reaction 1-octadecanoyl-sn-glycero-3-phosphocholine + H2O = 1-octadecanoyl-sn-glycero-3-phosphate + choline + H(+). The enzyme catalyses 1-hexadecanoyl-sn-glycero-3-phosphocholine + H2O = 1-hexadecanoyl-sn-glycero-3-phosphate + choline + H(+). It carries out the reaction 1-hexanoyl-sn-glycero-3-phosphocholine + H2O = 1-hexanoyl-sn-glycero-3-phosphate + choline + H(+). The catalysed reaction is 1-(9Z,12Z)-octadecadienoyl-sn-glycero-3-phosphocholine + H2O = 1-(9Z,12Z)-octadecadienoyl-sn-glycero-3-phosphate + choline + H(+). It catalyses the reaction sphing-4-enine-phosphocholine + H2O = sphing-4-enine 1-phosphate + choline + H(+). The enzyme catalyses 1-(5Z,8Z,11Z,14Z-eicosatetraenoyl)-sn-glycero-3-phosphocholine + H2O = 1-(5Z,8Z,11Z,14Z-eicosatetraenoyl)-sn-glycero-3-phosphate + choline + H(+). It carries out the reaction a 2-acyl-sn-glycero-3-phosphocholine + H2O = a 2-acyl-sn-glycerol 3-phosphate + choline + H(+). The catalysed reaction is a 1,2-diacyl-sn-glycero-3-phosphocholine + H2O = a 1,2-diacyl-sn-glycero-3-phosphate + choline + H(+). It catalyses the reaction 1,2-dioctanoyl-sn-glycero-3-phosphocholine + H2O = 1,2-dioctanoyl-sn-glycero-3-phosphate + choline + H(+). The enzyme catalyses 1,2-didecanoyl-sn-glycero-3-phosphocholine + H2O = 1,2-didecanoyl-sn-glycero-3-phosphate + choline + H(+). It carries out the reaction a 1-acyl-sn-glycero-3-phospho-L-serine + H2O = a 1-acyl-sn-glycero-3-phosphate + L-serine + H(+). The catalysed reaction is 1-(9Z-octadecenoyl)-sn-glycero-3-phospho-L-serine + H2O = 1-(9Z-octadecenoyl)-sn-glycero-3-phosphate + L-serine + H(+). It catalyses the reaction a 2-acyl-sn-glycero-3-phospho-L-serine + H2O = a 2-acyl-sn-glycerol 3-phosphate + L-serine + H(+). With respect to regulation, inhibited by vanadate. Inhibited by micromolar levels of bile salts, such as tauroursodeoxycholate. Not inhibited by taurodeoxycholate. Not inhibited by hydroxysterols, such as 7-hydroxycholesterol, testosterone, dexamethasone and prednisolone. Inhibited by EDTA and EGTA. Functionally, secreted lysophospholipase D that hydrolyzes lysophospholipids to produce the signaling molecule lysophosphatidic acid (LPA) in extracellular fluids. Its major substrate is lysophosphatidylcholine. Can also act on sphingosylphosphorylcholine producing sphingosine-1-phosphate, a modulator of cell motility. Can hydrolyze, in vitro, bis-pNPP, to some extent pNP-TMP, and barely ATP. Involved in several motility-related processes such as angiogenesis and neurite outgrowth. Acts as an angiogenic factor by stimulating migration of smooth muscle cells and microtubule formation. Stimulates migration of melanoma cells, probably via a pertussis toxin-sensitive G protein. May have a role in induction of parturition. Possible involvement in cell proliferation and adipose tissue development. Required for LPA production in activated platelets, cleaves the sn-1 lysophospholipids to generate sn-1 lysophosphatidic acids containing predominantly 18:2 and 20:4 fatty acids. Shows a preference for the sn-1 to the sn-2 isomer of 1-O-alkyl-sn-glycero-3-phosphocholine (lyso-PAF). The polypeptide is Autotaxin (Rattus norvegicus (Rat)).